A 644-amino-acid chain; its full sequence is uncharacterized protein (644 aa).

The helical transmembrane segment at 16–38 (LLSYLGVVGVGIAGLCIYRSVWG) threads the bilayer. Over residues 586 to 603 (VRQLQKEAGEGEAEEHPR) the composition is skewed to basic and acidic residues. Residues 586-613 (VRQLQKEAGEGEAEEHPRARPAAGKAQR) are disordered.

It is found in the membrane. This is an uncharacterized protein from Treponema pallidum (strain Nichols).